A 95-amino-acid chain; its full sequence is Aspartyl/glutamyl-tRNA(Asn/Gln) amidotransferase subunit C (95 aa).

It belongs to the GatC family. As to quaternary structure, heterotrimer of A, B and C subunits.

The enzyme catalyses L-glutamyl-tRNA(Gln) + L-glutamine + ATP + H2O = L-glutaminyl-tRNA(Gln) + L-glutamate + ADP + phosphate + H(+). It carries out the reaction L-aspartyl-tRNA(Asn) + L-glutamine + ATP + H2O = L-asparaginyl-tRNA(Asn) + L-glutamate + ADP + phosphate + 2 H(+). In terms of biological role, allows the formation of correctly charged Asn-tRNA(Asn) or Gln-tRNA(Gln) through the transamidation of misacylated Asp-tRNA(Asn) or Glu-tRNA(Gln) in organisms which lack either or both of asparaginyl-tRNA or glutaminyl-tRNA synthetases. The reaction takes place in the presence of glutamine and ATP through an activated phospho-Asp-tRNA(Asn) or phospho-Glu-tRNA(Gln). This Dehalococcoides mccartyi (strain CBDB1) protein is Aspartyl/glutamyl-tRNA(Asn/Gln) amidotransferase subunit C.